A 278-amino-acid chain; its full sequence is Biotin synthase (278 aa).

The Radical SAM core domain maps to 1 to 227 (MQIMLCAISN…QSVVMVAGGR (227 aa)). The [4Fe-4S] cluster site is built by cysteine 16, cysteine 20, and cysteine 23. [2Fe-2S] cluster is bound by residues cysteine 60, cysteine 95, and cysteine 153.

Belongs to the radical SAM superfamily. Biotin synthase family. In terms of assembly, homodimer. [4Fe-4S] cluster serves as cofactor. The cofactor is [2Fe-2S] cluster.

It catalyses the reaction (4R,5S)-dethiobiotin + (sulfur carrier)-SH + 2 reduced [2Fe-2S]-[ferredoxin] + 2 S-adenosyl-L-methionine = (sulfur carrier)-H + biotin + 2 5'-deoxyadenosine + 2 L-methionine + 2 oxidized [2Fe-2S]-[ferredoxin]. The protein operates within cofactor biosynthesis; biotin biosynthesis; biotin from 7,8-diaminononanoate: step 2/2. In terms of biological role, catalyzes the conversion of dethiobiotin (DTB) to biotin by the insertion of a sulfur atom into dethiobiotin via a radical-based mechanism. In Campylobacter jejuni subsp. doylei (strain ATCC BAA-1458 / RM4099 / 269.97), this protein is Biotin synthase.